A 72-amino-acid polypeptide reads, in one-letter code: Translation initiation factor IF-1 (72 aa).

In terms of domain architecture, S1-like spans methionine 1–lysine 72.

Belongs to the IF-1 family. As to quaternary structure, component of the 30S ribosomal translation pre-initiation complex which assembles on the 30S ribosome in the order IF-2 and IF-3, IF-1 and N-formylmethionyl-tRNA(fMet); mRNA recruitment can occur at any time during PIC assembly.

Its subcellular location is the cytoplasm. Its function is as follows. One of the essential components for the initiation of protein synthesis. Stabilizes the binding of IF-2 and IF-3 on the 30S subunit to which N-formylmethionyl-tRNA(fMet) subsequently binds. Helps modulate mRNA selection, yielding the 30S pre-initiation complex (PIC). Upon addition of the 50S ribosomal subunit IF-1, IF-2 and IF-3 are released leaving the mature 70S translation initiation complex. The protein is Translation initiation factor IF-1 of Streptococcus pneumoniae serotype 2 (strain D39 / NCTC 7466).